The sequence spans 362 residues: Terpene synthase 3 (362 aa).

The DDxx(x)D/E motif signature appears at 90-95 (DDFLER). The short motif at 239–247 (NDCVSYAKE) is the NDxxSxxxD/E motif element.

This sequence belongs to the terpene synthase family.

The catalysed reaction is (2E,6E)-farnesyl diphosphate = beta-maaliene + diphosphate. The enzyme catalyses (2E,6E)-farnesyl diphosphate = aristolene + diphosphate. It catalyses the reaction (2E,6E)-farnesyl diphosphate = calarene + diphosphate. It carries out the reaction (2E)-geranyl diphosphate = (E)-beta-ocimene + diphosphate. The catalysed reaction is (2E)-geranyl diphosphate = (Z)-beta-ocimene + diphosphate. The enzyme catalyses (2E)-geranyl diphosphate + H2O = linalool + diphosphate. It catalyses the reaction (2E)-geranyl diphosphate = beta-myrcene + diphosphate. In terms of biological role, terpene synthase that converts its substrate farnesyl diphosphate (FPP) into an unidentified sesquiterpene as a major product, as well as beta-maaliene, aristolene, calarene and 2 additional unidentified sesquiterpene as minor products. Is also able to convert geranyl diphosphate (GPP) into a mixture of monoterpenes including (Z)-beta-ocimene, (E)-beta-ocimene, allo-ocimene, linalool and beta-myrcene. This Dictyostelium discoideum (Social amoeba) protein is Terpene synthase 3.